Reading from the N-terminus, the 787-residue chain is Serine/threonine-protein kinase PLK4 (787 aa).

Residues Tyr-14–Met-268 enclose the Protein kinase domain. ATP is bound by residues Leu-20–Val-28 and Lys-43. Asp-139 functions as the Proton acceptor in the catalytic mechanism. The interval Ser-311–Leu-336 is disordered. A Cryptic POLO box 1 (CPB1) domain is found at Glu-386–Lys-505. One can recognise a Cryptic POLO box 2 (CPB2) domain in the interval Thr-506–His-613. The POLO box domain maps to Pro-675 to Cys-755.

The protein belongs to the protein kinase superfamily. Ser/Thr protein kinase family. CDC5/Polo subfamily. Homodimer. Post-translationally, ubiquitinated by the SCF(Slimb) ubiquitin ligase complex; leading to its degradation by the proteasome during interphase and regulating centriole number and ensuring the block to centriole reduplication.

The protein resides in the cytoplasm. Its subcellular location is the cytoskeleton. The protein localises to the microtubule organizing center. It localises to the centrosome. It is found in the centriole. It carries out the reaction L-seryl-[protein] + ATP = O-phospho-L-seryl-[protein] + ADP + H(+). The enzyme catalyses L-threonyl-[protein] + ATP = O-phospho-L-threonyl-[protein] + ADP + H(+). Functionally, serine/threonine-protein kinase that plays a central role in centriole duplication. Able to trigger procentriole formation on the surface of the mother centriole cylinder, using mother centriole as a platform, leading to the recruitment of centriole biogenesis proteins such as sas-6. When overexpressed, it is able to induce centrosome amplification through the simultaneous generation of multiple procentrioles adjoining each parental centriole during S phase. Centrosome amplification following overexpression can initiate tumorigenesis, highlighting the importance of centrosome regulation in cancers. This chain is Serine/threonine-protein kinase PLK4 (SAK), found in Drosophila willistoni (Fruit fly).